Consider the following 391-residue polypeptide: MVKNSYVLFARLCVELPPLPSDESHGEITTVERQFLRNCQMELENLSLKTELPLVYVDESKYWRFIKTVRVLAEVFNNMKTTRTTRKSIIQVLMNPILPSERSTDAMNLFLSTIEKLADLQFSDEDFNQLFVSSRLDLQLENKYNDKVEVKLRKEAEDALARKIKEVVDLTERLLQVEALEHKHKAKLQLRTETETAVAIERDYMRWKAEIFESEFNNQLVLRRESEIALDKERKELEGIKNLLETCFTGQKNLKSQVITWKDKYDQGSSIRKEKEVALSTKKLELEIFKQLAGSYKQDADAMRQERDNALKTVQEIVDEQQPPPSFICPITQDVMKNPHMAADGFTYELEAIQKWINTGHRTSPMTNLKLSHFSFFPNRALRSAIEELGR.

In terms of domain architecture, MIF4G spans 1–178 (MVKNSYVLFA…DLTERLLQVE (178 aa)). Residues 322-391 (QPPPSFICPI…LRSAIEELGR (70 aa)) form the U-box domain.

It catalyses the reaction S-ubiquitinyl-[E2 ubiquitin-conjugating enzyme]-L-cysteine + [acceptor protein]-L-lysine = [E2 ubiquitin-conjugating enzyme]-L-cysteine + N(6)-ubiquitinyl-[acceptor protein]-L-lysine.. It participates in protein modification; protein ubiquitination. Functions as an E3 ubiquitin ligase. This is U-box domain-containing protein 57 (PUB57) from Arabidopsis thaliana (Mouse-ear cress).